The sequence spans 593 residues: DNA primase (593 aa).

A CHC2-type zinc finger spans residues 40 to 64; the sequence is CPFHHEKTPSFTVSQKKQFYHCFGC. The 83-residue stretch at 260-342 folds into the Toprim domain; sequence KQLLVVEGYM…GRQLKFIFLP (83 aa). Mg(2+)-binding residues include Glu-266, Asp-310, and Asp-312.

The protein belongs to the DnaG primase family. As to quaternary structure, monomer. Interacts with DnaB. Zn(2+) is required as a cofactor. It depends on Mg(2+) as a cofactor.

The catalysed reaction is ssDNA + n NTP = ssDNA/pppN(pN)n-1 hybrid + (n-1) diphosphate.. Functionally, RNA polymerase that catalyzes the synthesis of short RNA molecules used as primers for DNA polymerase during DNA replication. The chain is DNA primase from Haemophilus influenzae (strain ATCC 51907 / DSM 11121 / KW20 / Rd).